We begin with the raw amino-acid sequence, 167 residues long: Caltractin (167 aa).

Residues 1–18 show a composition bias toward basic residues; that stretch reads MSSARTVRKDKPRGRHHG. The interval 1–23 is disordered; it reads MSSARTVRKDKPRGRHHGLTQQK. 4 EF-hand domains span residues 22 to 57, 58 to 93, 95 to 130, and 131 to 166; these read QKRQ…LGFE, MTEE…KIGE, DTKE…LGEN, and FTVK…TSYA. Positions 35, 37, 39, 41, 46, 71, 73, 75, 82, 108, 110, 112, 114, 119, 144, 146, 148, 150, and 155 each coordinate Ca(2+).

Belongs to the centrin family.

The protein localises to the cytoplasm. It is found in the cytoskeleton. The protein resides in the microtubule organizing center. In terms of biological role, plays a fundamental role in microtubule-organizing center structure and function. This chain is Caltractin, found in Atriplex nummularia (Old man saltbush).